Here is a 494-residue protein sequence, read N- to C-terminus: GTPase Der (494 aa).

EngA-type G domains are found at residues 3 to 166 (PVVA…VGEK) and 208 to 381 (IKLA…ECAT). GTP-binding positions include 9 to 16 (GRPNVGKS), 56 to 60 (DTGGI), 118 to 121 (NKTD), 214 to 221 (GRPNVGKS), 261 to 265 (DTAGV), and 326 to 329 (NKWD). A KH-like domain is found at 382-466 (RRVNTSMLTK…PIRIQFKEGE (85 aa)).

It belongs to the TRAFAC class TrmE-Era-EngA-EngB-Septin-like GTPase superfamily. EngA (Der) GTPase family. In terms of assembly, associates with the 50S ribosomal subunit.

Its function is as follows. GTPase that plays an essential role in the late steps of ribosome biogenesis. The sequence is that of GTPase Der from Serratia proteamaculans (strain 568).